We begin with the raw amino-acid sequence, 147 residues long: Putative pre-16S rRNA nuclease (147 aa).

Belongs to the YqgF nuclease family.

It localises to the cytoplasm. Its function is as follows. Could be a nuclease involved in processing of the 5'-end of pre-16S rRNA. The sequence is that of Putative pre-16S rRNA nuclease from Polynucleobacter necessarius subsp. necessarius (strain STIR1).